We begin with the raw amino-acid sequence, 311 residues long: tRNA-cytidine(32) 2-sulfurtransferase (311 aa).

Residues Ser-47–Ser-52 carry the PP-loop motif motif. [4Fe-4S] cluster contacts are provided by Cys-122, Cys-125, and Cys-213.

Belongs to the TtcA family. In terms of assembly, homodimer. Mg(2+) serves as cofactor. The cofactor is [4Fe-4S] cluster.

It localises to the cytoplasm. It catalyses the reaction cytidine(32) in tRNA + S-sulfanyl-L-cysteinyl-[cysteine desulfurase] + AH2 + ATP = 2-thiocytidine(32) in tRNA + L-cysteinyl-[cysteine desulfurase] + A + AMP + diphosphate + H(+). It functions in the pathway tRNA modification. Functionally, catalyzes the ATP-dependent 2-thiolation of cytidine in position 32 of tRNA, to form 2-thiocytidine (s(2)C32). The sulfur atoms are provided by the cysteine/cysteine desulfurase (IscS) system. In Citrobacter koseri (strain ATCC BAA-895 / CDC 4225-83 / SGSC4696), this protein is tRNA-cytidine(32) 2-sulfurtransferase.